The sequence spans 773 residues: 3-isopropylmalate dehydratase (773 aa).

Positions 355, 415, and 418 each coordinate [4Fe-4S] cluster.

The protein belongs to the aconitase/IPM isomerase family. In terms of assembly, monomer. Requires [4Fe-4S] cluster as cofactor.

The catalysed reaction is (2R,3S)-3-isopropylmalate = (2S)-2-isopropylmalate. It functions in the pathway amino-acid biosynthesis; L-leucine biosynthesis; L-leucine from 3-methyl-2-oxobutanoate: step 2/4. Functionally, catalyzes the isomerization between 2-isopropylmalate and 3-isopropylmalate, via the formation of 2-isopropylmaleate. The polypeptide is 3-isopropylmalate dehydratase (LEU1) (Mycosarcoma maydis (Corn smut fungus)).